An 868-amino-acid chain; its full sequence is Cytosolic phospholipase A2 epsilon (868 aa).

Residues 1–46 (MSLQASEGCPGLGTNVFVPQSPQTDEEGSRSGRSFSEFEDTQDLDT) form a disordered region. Positions 46–170 (TPGLPPFCPM…CFRKKTHVKF (125 aa)) constitute a C2 domain. Ca(2+) contacts are provided by aspartate 84, aspartate 90, aspartate 140, aspartate 142, and aspartate 148. The region spanning 324–856 (PCPETLDVRL…TLLQALRLAV (533 aa)) is the PLA2c domain. Catalysis depends on serine 412, which acts as the Nucleophile. Aspartate 700 functions as the Proton acceptor in the catalytic mechanism. Residue serine 800 is modified to Phosphoserine. The interval 857-868 (EKKKRLKGQCPS) is required for localization at membrane structures.

The cofactor is Ca(2+).

The protein localises to the cytoplasm. It localises to the cytosol. Its subcellular location is the early endosome membrane. The protein resides in the lysosome membrane. It is found in the cell membrane. It carries out the reaction a 1,2-diacyl-sn-glycero-3-phosphoethanolamine + a 1,2-diacyl-sn-glycero-3-phosphocholine = an N-acyl-1,2-diacyl-sn-glycero-3-phosphoethanolamine + a 2-acyl-sn-glycero-3-phosphocholine + H(+). The catalysed reaction is 1-hexadecanoyl-2-octadecanoyl-sn-glycero-3-phosphocholine + 1,2-di-(9Z-octadecenoyl)-sn-glycero-3-phosphoethanolamine = 2-octadecanoyl-sn-glycero-3-phosphocholine + N-hexadecanoyl-1,2-di-(9Z-octadecenoyl)-sn-glycero-3-phosphoethanolamine + H(+). It catalyses the reaction 1-octadecanoyl-2-hexadecanoyl-sn-glycero-3-phosphocholine + 1,2-di-(9Z-octadecenoyl)-sn-glycero-3-phosphoethanolamine = N-octadecanoyl-1,2-di-(9Z-octadecenoyl)-sn-glycero-3-phosphoethanolamine + 2-hexadecanoyl-sn-glycero-3-phosphocholine + H(+). The enzyme catalyses 1,2-di-(9Z-octadecenoyl)-sn-glycero-3-phosphoethanolamine + 1,2-dihexadecanoyl-sn-glycero-3-phosphocholine = N-hexadecanoyl-1,2-di-(9Z-octadecenoyl)-sn-glycero-3-phosphoethanolamine + 2-hexadecanoyl-sn-glycero-3-phosphocholine + H(+). It carries out the reaction 1,2-di-(5Z,8Z,11Z,14Z-eicosatetraenoyl)-sn-glycero-3-phosphocholine + 1,2-di-(9Z-octadecenoyl)-sn-glycero-3-phosphoethanolamine = N-(5Z,8Z,11Z,14Z-eicosatetraenoyl)-1,2-di-(9Z-octadecenoyl)-sn-glycero-3-phosphoethanolamine + 2-(5Z,8Z,11Z,14Z)-eicosatetraenoyl-sn-glycero-3-phosphocholine + H(+). The catalysed reaction is 2 1,2-di-(9Z-octadecenoyl)-sn-glycero-3-phosphoethanolamine = N,1,2-tri-(9Z-octadecenoyl)-sn-glycero-3-phosphoethanolamine + 2-(9Z-octadecenoyl)-sn-glycero-3-phosphoethanolamine + H(+). It catalyses the reaction 1-(1Z-octadecenyl)-2-(9Z-octadecenoyl)-sn-glycero-3-phosphoethanolamine + 1,2-dihexadecanoyl-sn-glycero-3-phosphocholine = 1-O-(1Z-octadecenoyl)-2-(9Z-octadecenoyl)-sn-glycero-3-phospho-N-hexadecanoyl-ethanolamine + 2-hexadecanoyl-sn-glycero-3-phosphocholine + H(+). The enzyme catalyses a 1,2-diacyl-sn-glycero-3-phosphocholine + H2O = a 1-acyl-sn-glycero-3-phosphocholine + a fatty acid + H(+). It carries out the reaction 1-hexadecanoyl-2-(5Z,8Z,11Z,14Z-eicosatetraenoyl)-sn-glycero-3-phosphocholine + H2O = 1-hexadecanoyl-sn-glycero-3-phosphocholine + (5Z,8Z,11Z,14Z)-eicosatetraenoate + H(+). The catalysed reaction is 1-hexadecanoyl-sn-glycero-3-phosphocholine + H2O = sn-glycerol 3-phosphocholine + hexadecanoate + H(+). Stimulated by cytosolic Ca(2+). Stimulated by anionic phospholipids such as phosphatidylserines, phosphatidates and phosphatidylinositols. Calcium-dependent N-acyltransferase involved in the biosynthesis of N-acyl ethanolamines (NAEs) in the brain. Transfers the sn-1 fatty acyl chain of phosphatidylcholine (fatty acyl donor) to the amine group of phosphatidylethanolamine (fatty acyl acceptor) to generate N-acyl phosphatidylethanolamine (NAPE). Similarly can use plasmenylethanolamine as a fatty acyl acceptor to form N-acyl plasmenylethanolamine (N-Acyl-PlsEt). Both NAPE and N-Acyl-PlsEt can serve as precursors of bioactive NAEs like N-arachidonoyl phosphatidylethanolamine also called anandamide. Has weak phospholipase A2 and lysophospholipase activities. Regulates intracellular membrane trafficking that requires modulation of membrane curvature as it occurs by enrichment in lysophospholipids. Promotes tubule formation involved in clathrin-independent endocytotic trafficking and cargo recycling. This chain is Cytosolic phospholipase A2 epsilon, found in Homo sapiens (Human).